The primary structure comprises 417 residues: Snake venom metalloproteinase acutolysin-C (417 aa).

The first 20 residues, Met-1–Ser-20, serve as a signal peptide directing secretion. The propeptide at Ile-21–Pro-189 is activation peptide. In terms of domain architecture, Peptidase M12B spans Thr-197–Ser-392. Cystine bridges form between Cys-308–Cys-387, Cys-349–Cys-371, and Cys-351–Cys-354. His-333 lines the Zn(2+) pocket. Glu-334 is a catalytic residue. Positions 337 and 343 each coordinate Zn(2+). Positions Leu-393 to Ala-417 are excised as a propeptide. The segment at Val-398–Ala-417 is disordered. Positions Pro-407–Ala-417 are enriched in acidic residues.

The protein belongs to the venom metalloproteinase (M12B) family. P-I subfamily. In terms of assembly, monomer. Zn(2+) is required as a cofactor. In terms of tissue distribution, expressed by the venom gland.

It is found in the secreted. In terms of biological role, this protein is an alkaline zinc metalloprotease from snake venom that possesses weak hemorrhagic activity. The protein is Snake venom metalloproteinase acutolysin-C of Deinagkistrodon acutus (Hundred-pace snake).